We begin with the raw amino-acid sequence, 234 residues long: MKILFCFVLLAIAALRASVINRHNKRFAGFSVAGIGGTAGCVVVDNKLFANSFYLRDLTTEEQRELAQYVEDSNQYKEEVKTSLEERRKGWQLARHGEKDAKVLSSLAEKKFPKPPKKPSFCSAGDTTQYYFDGCMVQNNKIYVGRMYVRDLTSDEINQLKTFDAKMTAYQKYLSSSIQQQVDSLFGDKSNLFNLFTDTRHETSSQPSDATTISTTTQAPVEPPETPHFCIAIY.

A signal peptide spans 1 to 17; the sequence is MKILFCFVLLAIAALRA. The cysteines at positions 135 and 230 are disulfide-linked. Residues 200–222 form a disordered region; sequence RHETSSQPSDATTISTTTQAPVE. Over residues 204 to 219 the composition is skewed to polar residues; sequence SSQPSDATTISTTTQA.

Belongs to the protease inhibitor I33 family.

It is found in the secreted. In terms of biological role, aspartyl protease inhibitor. The protein is Pepsin inhibitor Dit33 (DIT33) of Dirofilaria immitis (Canine heartworm).